Consider the following 233-residue polypeptide: Purine nucleoside phosphorylase DeoD-type (233 aa).

A purine D-ribonucleoside is bound at residue H4. Phosphate contacts are provided by residues G20, R24, R43, and R87–T90. Residues E179–E181 and S203–D204 each bind a purine D-ribonucleoside. The active-site Proton donor is D204.

This sequence belongs to the PNP/UDP phosphorylase family. In terms of assembly, homohexamer; trimer of homodimers.

The catalysed reaction is a purine D-ribonucleoside + phosphate = a purine nucleobase + alpha-D-ribose 1-phosphate. It catalyses the reaction a purine 2'-deoxy-D-ribonucleoside + phosphate = a purine nucleobase + 2-deoxy-alpha-D-ribose 1-phosphate. Functionally, catalyzes the reversible phosphorolytic breakdown of the N-glycosidic bond in the beta-(deoxy)ribonucleoside molecules, with the formation of the corresponding free purine bases and pentose-1-phosphate. This chain is Purine nucleoside phosphorylase DeoD-type, found in Helicobacter pylori (strain HPAG1).